Consider the following 348-residue polypeptide: Histidinol-phosphate aminotransferase (348 aa).

At K210 the chain carries N6-(pyridoxal phosphate)lysine.

Belongs to the class-II pyridoxal-phosphate-dependent aminotransferase family. Histidinol-phosphate aminotransferase subfamily. As to quaternary structure, homodimer. Requires pyridoxal 5'-phosphate as cofactor.

It catalyses the reaction L-histidinol phosphate + 2-oxoglutarate = 3-(imidazol-4-yl)-2-oxopropyl phosphate + L-glutamate. It participates in amino-acid biosynthesis; L-histidine biosynthesis; L-histidine from 5-phospho-alpha-D-ribose 1-diphosphate: step 7/9. The protein is Histidinol-phosphate aminotransferase of Pseudomonas putida (strain W619).